Reading from the N-terminus, the 263-residue chain is Non-homologous end joining protein Ku 3 (263 aa).

The Ku domain maps to 6–169 (FGLVSVPVQL…WADEVRDPHR (164 aa)).

Belongs to the prokaryotic Ku family. As to quaternary structure, homodimer. Interacts with LigD.

Its function is as follows. With LigD forms a non-homologous end joining (NHEJ) DNA repair enzyme, which repairs dsDNA breaks with reduced fidelity. Binds linear dsDNA with 5'- and 3'- overhangs but not closed circular dsDNA nor ssDNA. Recruits and stimulates the ligase activity of LigD. The protein is Non-homologous end joining protein Ku 3 of Saccharopolyspora erythraea (strain ATCC 11635 / DSM 40517 / JCM 4748 / NBRC 13426 / NCIMB 8594 / NRRL 2338).